We begin with the raw amino-acid sequence, 195 residues long: Imidazoleglycerol-phosphate dehydratase (195 aa).

The protein belongs to the imidazoleglycerol-phosphate dehydratase family.

The protein resides in the cytoplasm. It carries out the reaction D-erythro-1-(imidazol-4-yl)glycerol 3-phosphate = 3-(imidazol-4-yl)-2-oxopropyl phosphate + H2O. It participates in amino-acid biosynthesis; L-histidine biosynthesis; L-histidine from 5-phospho-alpha-D-ribose 1-diphosphate: step 6/9. This Aminomonas aminovorus protein is Imidazoleglycerol-phosphate dehydratase.